A 78-amino-acid polypeptide reads, in one-letter code: UPF0291 protein ABC2165 (78 aa).

Positions 56–78 (AKGNDVTPQKLKDSKAQKHKRLH) are disordered.

Belongs to the UPF0291 family.

Its subcellular location is the cytoplasm. The sequence is that of UPF0291 protein ABC2165 from Shouchella clausii (strain KSM-K16) (Alkalihalobacillus clausii).